A 414-amino-acid chain; its full sequence is COUP transcription factor 2 (414 aa).

The segment at 1–72 (MAMVVSTWRD…PGGPGSDKQQ (72 aa)) is disordered. Residues 27 to 37 (PPVPGPPPGAP) show a composition bias toward pro residues. Residues 38–57 (HTPQTPGQGGPASTPAQTAA) show a composition bias toward low complexity. Position 51 is a phosphothreonine (Thr-51). The segment covering 58–67 (GGQGGPGGPG) has biased composition (gly residues). A DNA-binding region (nuclear receptor) is located at residues 76–151 (HIECVVCGDK…VGMRREAVQR (76 aa)). NR C4-type zinc fingers lie at residues 79–99 (CVVC…CEGC) and 115–139 (CRAN…LKKC). Residues 117-414 (ANRNCPIDQH…SFNWPYMAIQ (298 aa)) are interaction with ZFPM2. The NR LBD domain occupies 177–403 (YLSGYISLLL…TLIRDMLLSG (227 aa)). The tract at residues 337–414 (LQEKSQCALE…SFNWPYMAIQ (78 aa)) is important for dimerization.

It belongs to the nuclear hormone receptor family. NR2 subfamily. In terms of assembly, interacts with SQSTM1. Binds DNA as a dimer; homodimer or heterodimer with NR2F6. Interacts with NCOA1, NCOA2, NCOA3 and PPARGC1A. Interacts with ZFPM2. Ubiquitous. Expressed in the stromal cells of developing fetal ovaries.

It is found in the nucleus. Ligand-activated transcription factor. Activated by high concentrations of 9-cis-retinoic acid and all-trans-retinoic acid, but not by dexamethasone, cortisol or progesterone (in vitro). Regulation of the apolipoprotein A-I gene transcription. Binds to DNA site A. May be required to establish ovary identity during early gonad development. The polypeptide is COUP transcription factor 2 (NR2F2) (Homo sapiens (Human)).